Consider the following 83-residue polypeptide: Cell division topological specificity factor (83 aa).

It belongs to the MinE family.

Its function is as follows. Prevents the cell division inhibition by proteins MinC and MinD at internal division sites while permitting inhibition at polar sites. This ensures cell division at the proper site by restricting the formation of a division septum at the midpoint of the long axis of the cell. The polypeptide is Cell division topological specificity factor (Buchnera aphidicola subsp. Baizongia pistaciae (strain Bp)).